The primary structure comprises 702 residues: Methionine--tRNA ligase (702 aa).

Residues 14–24 carry the 'HIGH' region motif; that stretch reads PYANGPVHLGH. 4 residues coordinate Zn(2+): C146, C149, C159, and C162. Positions 344-348 match the 'KMSKS' region motif; sequence KFSKS. Residue K347 coordinates ATP. One can recognise a tRNA-binding domain in the interval 601–702; the sequence is EFLKVDLRVA…GKEINGKKIQ (102 aa).

It belongs to the class-I aminoacyl-tRNA synthetase family. MetG type 1 subfamily. In terms of assembly, homodimer. Requires Zn(2+) as cofactor.

It localises to the cytoplasm. It catalyses the reaction tRNA(Met) + L-methionine + ATP = L-methionyl-tRNA(Met) + AMP + diphosphate. Is required not only for elongation of protein synthesis but also for the initiation of all mRNA translation through initiator tRNA(fMet) aminoacylation. In Chlorobium phaeobacteroides (strain DSM 266 / SMG 266 / 2430), this protein is Methionine--tRNA ligase.